The chain runs to 466 residues: Ras GTPase-activating protein-binding protein 1 (466 aa).

One can recognise an NTF2 domain in the interval 11–133 (VGREFVRQYY…FYVHNDIFRY (123 aa)). Glycyl lysine isopeptide (Lys-Gly) (interchain with G-Cter in ubiquitin) cross-links involve residues Lys-36, Lys-50, Lys-59, Lys-64, Lys-76, and Lys-123. The tract at residues 142–225 (VTEPQEESEE…EPVLEETAPE (84 aa)) is acidic disordered region. The residue at position 143 (Thr-143) is a Phosphothreonine. Disordered stretches follow at residues 144–172 (EPQE…DSGT) and 184–243 (EEHL…QTVQ). Acidic residues-rich tracts occupy residues 145–157 (PQEE…EEPE) and 185–206 (EHLE…EQEP). Phosphoserine is present on Ser-149. Ser-231, Ser-232, Ser-250, and Ser-253 each carry phosphoserine. The tract at residues 255-329 (TSKNLPPSGA…REAGEQGDIE (75 aa)) is disordered. 2 stretches are compositionally biased toward basic and acidic residues: residues 297 to 307 (PQRDQRVREQR) and 318 to 329 (PIREAGEQGDIE). The RRM domain occupies 340–415 (HQLFIGNLPH…VRLNVEEKKT (76 aa)). Glycyl lysine isopeptide (Lys-Gly) (interchain with G-Cter in ubiquitin) cross-links involve residues Lys-353 and Lys-357. Ser-373 is modified (phosphoserine). Residue Lys-376 forms a Glycyl lysine isopeptide (Lys-Gly) (interchain with G-Cter in ubiquitin) linkage. Lys-376 is modified (N6-acetyllysine; alternate). Residue Lys-376 forms a Glycyl lysine isopeptide (Lys-Gly) (interchain with G-Cter in SUMO2); alternate linkage. A Glycyl lysine isopeptide (Lys-Gly) (interchain with G-Cter in ubiquitin); alternate cross-link involves residue Lys-393. The RG-rich region stretch occupies residues 410–466 (VEEKKTRAAREGDRRDNRLRGPGGPRGGLGGGMRGPPRGGMVQKPGFGVGRGLAPRQ). The span at 413–428 (KKTRAAREGDRRDNRL) shows a compositional bias: basic and acidic residues. The tract at residues 413-466 (KKTRAAREGDRRDNRLRGPGGPRGGLGGGMRGPPRGGMVQKPGFGVGRGLAPRQ) is disordered. Asymmetric dimethylarginine is present on Arg-429. The span at 430-447 (GPGGPRGGLGGGMRGPPR) shows a compositional bias: gly residues. Arg-435 bears the Asymmetric dimethylarginine; alternate mark. Arg-435 carries the dimethylated arginine; alternate modification. Omega-N-methylarginine; alternate is present on Arg-435. Arg-447 is modified (omega-N-methylarginine). Position 460 is a dimethylated arginine; alternate (Arg-460). Arg-460 carries the post-translational modification Omega-N-methylarginine; alternate. Residue Arg-465 is modified to Omega-N-methylarginine.

As to quaternary structure, homodimer and oligomer. Component of a TAU mRNP complex, at least composed of IGF2BP1, ELAVL4 and G3BP1. Binds to the SH3 domain of Ras GTPase-activating protein (RASA1) in proliferating cells. No interaction in quiescent cells. Interacts (via NTF2 domain) with USP10; inhibiting stress granule formation by lowering G3BP1 valence. Interacts (via NTF2 domain) with CAPRIN1; promoting stress granule formation by lowering the saturation-concentration of G3BP1. Interacts (via NTF2 domain) with UBAP2L; promoting stress granule formation. Associates (via RG-rich region) with 40S ribosome subunits. Interacts with RPTOR and SPAG5; this complex is increased by oxidative stress. Interacts with ATXN2L. Interacts with STYXL1. Interacts with CGAS (via N-terminus); this interaction promotes the DNA-binding and activation of CGAS. Interacts (via C-terminus) with RIGI. Interacts with PABPC1. Interacts with QKI (isoforms QKI6 and QKI7); directing N(7)-methylguanine-containing mRNAs to stress granules. In terms of assembly, (Microbial infection) Interacts with Semliki forest virus non-structural protein 3 (via C-terminus); this interaction inhibits the formation of stress granules on viral mRNAs and the nsp3-G3BP1 complexes bind viral RNAs and probably orchestrate the assembly of viral replication complexes. (Microbial infection) Interacts with Chikungunya virus non-structural protein 3 (via C-terminus); this interaction inhibits the formation of stress granules on viral mRNAs and the nsp3-G3BP1 complexes bind viral RNAs and probably orchestrate the assembly of viral replication complexes. As to quaternary structure, (Microbial infection) Interacts with Sindbis virus non-structural protein 3 (via C-terminus); this interaction inhibits the formation of stress granules on viral mRNAs and the nsp3-G3BP1 complexes bind viral RNAs and probably orchestrate the assembly of viral replication complexes. In terms of assembly, (Microbial infection) Interacts with Zika virus capsid protein C; this interaction is probably linked to the inhibition of stress granules formation by the virus. (Microbial infection) Interacts with reovirus type 2 protein sigma-NS; this interaction induces the relocalization of G3BP1 to the outer periphery of sigma-NS/mu-Ns viral factories and is probably involved in the suppression of the integrated stress response by the virus. As to quaternary structure, (Microbial infection) Interacts with SARS-CoV-2 N protein; the interaction is enhanced by host HDAC6 which deacetylates the viral N protein and promotes N protein association with G3BP1, disrupting stress granule formation and facilitating viral replication. Interacts with HDAC6; the interaction increases during SARS-CoV-2 infection. It depends on Mg(2+) as a cofactor. Post-translationally, phosphorylation of the acidic disordered region regulates stress granule assembly. RASA1-dependent phosphorylation of Ser-149 induces a conformational change that prevents self-association. Dephosphorylation after HRAS activation is required for stress granule assembly. Ser-149 phosphorylation induces partial nuclear localization. Ubiquitinated by TRIM21 via 'Lys-63'-linked polyubiquitination in the NTF2 domain in response to heat shock, leading to stress granule disassembly: ubiquitination promotes interaction with the FAF2 adapter, followed by interaction with VCP, which extracts G3BP1 from stress granules, leading to stress granule disassembly. In case of prolonged stress, ubiquitination by TRIM21 leads to autophagy-dependent degradation of G3BP1 via recruitment of ubiquitinated G3BP1 by SQSTM1 and/or CALCOCO2 to autophagosomes. In terms of processing, (Microbial infection) Cleaved by human enterovirus 71; this cleavage induces the disassembly of cytoplasmic stress granules. Cleaved by Foot-and-mouth disease virus; this cleavage suppresses the formation of cytoplasmic stress granules. Post-translationally, arg-435 is dimethylated, probably to asymmetric dimethylarginine. (Microbial infection) Cleaved by Encephalomyocarditis virus protease 3C; this cleavage suppresses the formation of cytoplasmic stress granules. As to expression, ubiquitous.

Its subcellular location is the cytoplasm. It is found in the cytosol. It localises to the perikaryon. The protein localises to the stress granule. The protein resides in the nucleus. The enzyme catalyses ATP + H2O = ADP + phosphate + H(+). Under physiological conditions, G3BP1 adopts a compact state that is stabilized by intramolecular interactions between the RG-rich and the acidic regions that inhibit phase separation. Upon stress, polysomes disassemble and mRNAs are released in an unfolded protein-free state. Binding of unfolded mRNA to G3BP1 outcompetes the intramolecular interactions and RNA-bound G3BP1 adopts an expanded conformation in which the RG-rich region becomes exposed to engage in protein-protein and protein-RNA interactions, allowing physical cross-linking of RNA molecules to form protein-RNA condensates, leading to liquid-liquid phase separation (LLPS). Its function is as follows. Protein involved in various processes, such as stress granule formation and innate immunity. Plays an essential role in stress granule formation. Stress granules are membraneless compartments that store mRNAs and proteins, such as stalled translation pre-initiation complexes, in response to stress. Promotes formation of stress granules phase-separated membraneless compartment by undergoing liquid-liquid phase separation (LLPS) upon unfolded RNA-binding: functions as a molecular switch that triggers RNA-dependent LLPS in response to a rise in intracellular free RNA concentrations. Also acts as an ATP- and magnesium-dependent helicase: unwinds DNA/DNA, RNA/DNA, and RNA/RNA substrates with comparable efficiency. Acts unidirectionally by moving in the 5' to 3' direction along the bound single-stranded DNA. Unwinds preferentially partial DNA and RNA duplexes having a 17 bp annealed portion and either a hanging 3' tail or hanging tails at both 5'- and 3'-ends. Plays an essential role in innate immunity by promoting CGAS and RIGI activity. Participates in the DNA-triggered cGAS/STING pathway by promoting the DNA binding and activation of CGAS. Triggers the condensation of cGAS, a process probably linked to the formation of membrane-less organelles. Also enhances RIGI-induced type I interferon production probably by helping RIGI at sensing pathogenic RNA. May also act as a phosphorylation-dependent sequence-specific endoribonuclease in vitro: Cleaves exclusively between cytosine and adenine and cleaves MYC mRNA preferentially at the 3'-UTR. The chain is Ras GTPase-activating protein-binding protein 1 from Homo sapiens (Human).